The primary structure comprises 244 residues: Neurogenin-1 (244 aa).

Disordered stretches follow at residues 1-27 (MPAP…SSFL) and 39-82 (LAST…ARVR). Positions 10–27 (SDLDCSSSNSSSDLSSFL) are enriched in low complexity. A bHLH domain is found at 93-145 (SRRVKANDRERNRMHNLNAALDALRSVLPSFPDDTKLTKIETLRFAYNYIWAL).

Efficient DNA binding requires dimerization with another bHLH protein. As to expression, expression restricted to the embryonic nervous system.

The protein resides in the nucleus. In terms of biological role, acts as a transcriptional regulator. Involved in the initiation of neuronal differentiation. Activates transcription by binding to the E box (5'-CANNTG-3'). Associates with chromatin to enhancer regulatory elements in genes encoding key transcriptional regulators of neurogenesis. This chain is Neurogenin-1 (Neurog1), found in Mus musculus (Mouse).